Consider the following 285-residue polypeptide: Glutamate racemase (285 aa).

Substrate-binding positions include 28 to 29 and 60 to 61; these read DS and YG. The active-site Proton donor/acceptor is the Cys92. 93-94 contacts substrate; the sequence is NT. Cys204 functions as the Proton donor/acceptor in the catalytic mechanism. 205–206 serves as a coordination point for substrate; sequence TH.

Belongs to the aspartate/glutamate racemases family.

It carries out the reaction L-glutamate = D-glutamate. Its pathway is cell wall biogenesis; peptidoglycan biosynthesis. In terms of biological role, provides the (R)-glutamate required for cell wall biosynthesis. The chain is Glutamate racemase from Escherichia coli O9:H4 (strain HS).